We begin with the raw amino-acid sequence, 800 residues long: Elongation factor G, mitochondrial (800 aa).

The transit peptide at 1–59 directs the protein to the mitochondrion; sequence MRVIRAVATLHAGRAAAVRQGVRSVSLGACRAAVETPSLRSAGSQFESRRLFSRSSYLR. The tr-type G domain occupies 99-385; the sequence is ARVRNIGIAA…AVCDYLPNPN (287 aa). GTP contacts are provided by residues 108–115, 183–187, and 237–240; these read AHIDSGKT, DTPGH, and NKMD.

It belongs to the TRAFAC class translation factor GTPase superfamily. Classic translation factor GTPase family. EF-G/EF-2 subfamily.

It localises to the mitochondrion. Its pathway is protein biosynthesis; polypeptide chain elongation. Its function is as follows. Mitochondrial GTPase that catalyzes the GTP-dependent ribosomal translocation step during translation elongation. During this step, the ribosome changes from the pre-translocational (PRE) to the post-translocational (POST) state as the newly formed A-site-bound peptidyl-tRNA and P-site-bound deacylated tRNA move to the P and E sites, respectively. Catalyzes the coordinated movement of the two tRNA molecules, the mRNA and conformational changes in the ribosome. The sequence is that of Elongation factor G, mitochondrial (mef1) from Neurospora crassa (strain ATCC 24698 / 74-OR23-1A / CBS 708.71 / DSM 1257 / FGSC 987).